We begin with the raw amino-acid sequence, 146 residues long: Prolactin-inducible protein homolog (146 aa).

The first 26 residues, 1–26 (MQGLSFTFSAVTLFLVLCLQLGIIES), serve as a signal peptide directing secretion. At Q27 the chain carries Pyrrolidone carboxylic acid. Intrachain disulfides connect C65–C91 and C89–C123.

It belongs to the PIP family. Monomer. Interacts with AZGP1. Lacrimal and submaxillary glands.

It is found in the secreted. The polypeptide is Prolactin-inducible protein homolog (Pip) (Mus musculus (Mouse)).